Reading from the N-terminus, the 159-residue chain is Putative viral CXC chemokine 2 (159 aa).

2 cysteine pairs are disulfide-bonded: Cys50-Cys77 and Cys52-Cys93.

This sequence belongs to the intercrine alpha (chemokine CxC) family.

In Human cytomegalovirus (strain Towne) (HHV-5), this protein is Putative viral CXC chemokine 2 (UL147).